A 206-amino-acid chain; its full sequence is Small ribosomal subunit protein uS4 (206 aa).

The 63-residue stretch at 96-158 (GRLDNVVYRM…AKKQSRIKAA (63 aa)) folds into the S4 RNA-binding domain.

Belongs to the universal ribosomal protein uS4 family. Part of the 30S ribosomal subunit. Contacts protein S5. The interaction surface between S4 and S5 is involved in control of translational fidelity.

Its function is as follows. One of the primary rRNA binding proteins, it binds directly to 16S rRNA where it nucleates assembly of the body of the 30S subunit. In terms of biological role, with S5 and S12 plays an important role in translational accuracy. This chain is Small ribosomal subunit protein uS4, found in Vibrio cholerae serotype O1 (strain ATCC 39541 / Classical Ogawa 395 / O395).